The chain runs to 197 residues: UPF0301 protein AnaeK_4073 (197 aa).

Belongs to the UPF0301 (AlgH) family.

The polypeptide is UPF0301 protein AnaeK_4073 (Anaeromyxobacter sp. (strain K)).